Consider the following 276-residue polypeptide: Large ribosomal subunit protein uL2c (276 aa).

2 disordered regions span residues 1 to 51 and 224 to 276; these read MAIR…GIIT and VVMN…RRRK. 2 stretches are compositionally biased toward polar residues: residues 7–18 and 27–37; these read RTYTPSTRNRPI and SNPQKKLTSGQ.

The protein belongs to the universal ribosomal protein uL2 family. Part of the 50S ribosomal subunit.

It is found in the plastid. It localises to the chloroplast. The sequence is that of Large ribosomal subunit protein uL2c (rpl2) from Cycas taitungensis (Prince sago).